The chain runs to 1015 residues: Fibronectin-binding protein A (1015 aa).

The N-terminal stretch at M1 to A36 is a signal peptide. The YSIRK-G/S signaling motif motif lies at Y7–S18. A ligand-binding A region region spans residues A37–N512. A compositionally biased stretch (polar residues) spans S75 to T92. Residues S75–S199 form a disordered region. The span at T112–V126 shows a compositional bias: basic and acidic residues. The span at T129–Q139 shows a compositional bias: polar residues. Over residues D179 to T193 the composition is skewed to basic and acidic residues. Residues G194–N512 form a fibrinogen/elastin/tropoelastin-binding region. The fibronectin-binding stretch occupies residues G513 to T873. A B-1 repeat occupies E546 to I575. Positions E546 to S605 are 2 X approximate tandem repeats. A B-2 repeat occupies E576–S605. Disordered regions lie at residues G596–H623, L741–D815, E828–V953, and V966–M992. The D-1 repeat unit spans residues G746–Q783. The 4 X approximate tandem repeats stretch occupies residues G746–P875. A compositionally biased stretch (polar residues) spans P780–S791. The D-2 repeat unit spans residues G784–H821. One copy of the D-3 repeat lies at G822–S860. A compositionally biased stretch (basic and acidic residues) spans E828–P839. Residues G861–P875 form a D-4; truncated repeat. Over residues P875–P935 the composition is skewed to pro residues. WR repeat units lie at residues P876 to T889, P890 to T903, P904 to T917, P918 to K931, and P932 to K945. A 5 X tandem repeats, Pro-rich (WR) region spans residues P876–K945. The LPXTG sorting signal signature appears at L979 to G983. Position 982 is a pentaglycyl murein peptidoglycan amidated threonine (T982). Residues G983–A1015 constitute a propeptide, removed by sortase.

It localises to the secreted. The protein resides in the cell wall. In terms of biological role, promotes bacterial attachment to multiple substrates, such as fibronectin (Fn), fibrinogen (Fg), elastin peptides and tropoelastin. This confers to S.aureus the ability to invade endothelial cells. Promotes adherence to and aggregation of activated platelets. This is Fibronectin-binding protein A (fnbA) from Staphylococcus aureus (strain MSSA476).